The following is a 274-amino-acid chain: Dermonecrotic toxin SdSicTox-betaIIB2i (274 aa).

The active site involves histidine 5. The Mg(2+) site is built by glutamate 25 and aspartate 27. Catalysis depends on histidine 41, which acts as the Nucleophile. Disulfide bonds link cysteine 45–cysteine 51 and cysteine 47–cysteine 190. Aspartate 85 contributes to the Mg(2+) binding site.

Belongs to the arthropod phospholipase D family. Class II subfamily. Requires Mg(2+) as cofactor. As to expression, expressed by the venom gland.

Its subcellular location is the secreted. The enzyme catalyses an N-(acyl)-sphingosylphosphocholine = an N-(acyl)-sphingosyl-1,3-cyclic phosphate + choline. The catalysed reaction is an N-(acyl)-sphingosylphosphoethanolamine = an N-(acyl)-sphingosyl-1,3-cyclic phosphate + ethanolamine. It carries out the reaction a 1-acyl-sn-glycero-3-phosphocholine = a 1-acyl-sn-glycero-2,3-cyclic phosphate + choline. It catalyses the reaction a 1-acyl-sn-glycero-3-phosphoethanolamine = a 1-acyl-sn-glycero-2,3-cyclic phosphate + ethanolamine. In terms of biological role, dermonecrotic toxins cleave the phosphodiester linkage between the phosphate and headgroup of certain phospholipids (sphingolipid and lysolipid substrates), forming an alcohol (often choline) and a cyclic phosphate. This toxin acts on sphingomyelin (SM). It may also act on ceramide phosphoethanolamine (CPE), lysophosphatidylcholine (LPC) and lysophosphatidylethanolamine (LPE), but not on lysophosphatidylserine (LPS), and lysophosphatidylglycerol (LPG). It acts by transphosphatidylation, releasing exclusively cyclic phosphate products as second products. Induces dermonecrosis, hemolysis, increased vascular permeability, edema, inflammatory response, and platelet aggregation. In Sicarius cf. damarensis (strain GJB-2008) (Six-eyed sand spider), this protein is Dermonecrotic toxin SdSicTox-betaIIB2i.